Consider the following 388-residue polypeptide: Alanine racemase (388 aa).

Catalysis depends on K44, which acts as the Proton acceptor; specific for D-alanine. Residue K44 is modified to N6-(pyridoxal phosphate)lysine. R142 provides a ligand contact to substrate. Residue Y273 is the Proton acceptor; specific for L-alanine of the active site. M321 contributes to the substrate binding site.

This sequence belongs to the alanine racemase family. It depends on pyridoxal 5'-phosphate as a cofactor.

It carries out the reaction L-alanine = D-alanine. It functions in the pathway amino-acid biosynthesis; D-alanine biosynthesis; D-alanine from L-alanine: step 1/1. Functionally, catalyzes the interconversion of L-alanine and D-alanine. May also act on other amino acids. The protein is Alanine racemase (alr) of Mycobacterium avium (strain 104).